Here is a 530-residue protein sequence, read N- to C-terminus: Pyridoxine/pyridoxamine 5'-phosphate oxidase 1, chloroplastic (530 aa).

A chloroplast-targeting transit peptide spans 1 to 64; the sequence is MRNVIRRVTT…TLCTKVIIPN (64 aa). Residue M65 is modified to N-acetylmethionine. The region spanning 81 to 297 is the YjeF N-terminal domain; that stretch reads AAEIDETLMG…SVAEKYKLEL (217 aa). 131–135 serves as a coordination point for (6S)-NADPHX; that stretch reads NNGGD. K(+)-binding residues include N132 and D196. (6S)-NADPHX is bound by residues 200–206 and D238; that span reads GFSFHGA. S241 lines the K(+) pocket. Residue 247-250 coordinates pyridoxal 5'-phosphate; it reads EGDH. 321–324 serves as a coordination point for substrate; it reads RVNY. 325–327 provides a ligand contact to pyridoxal 5'-phosphate; the sequence is VSP. 374–377 lines the FMN pocket; sequence RMVL. A pyridoxal 5'-phosphate-binding site is contributed by K379. FMN contacts are provided by residues 389 to 390, 395 to 396, and Q418; these read FT and KK. Pyridoxal 5'-phosphate-binding residues include Y436, R440, and S444. Residues 453 to 454 and W499 contribute to the FMN site; that span reads QS. Residue 505-507 coordinates pyridoxal 5'-phosphate; sequence RLH. R509 lines the FMN pocket.

The protein in the N-terminal section; belongs to the NnrE/AIBP family. It in the C-terminal section; belongs to the pyridoxamine 5'-phosphate oxidase family. Homodimer. FMN is required as a cofactor. It depends on K(+) as a cofactor. Expressed in leaves, stems, flowers and roots.

The protein localises to the plastid. It localises to the chloroplast. It catalyses the reaction pyridoxamine 5'-phosphate + O2 + H2O = pyridoxal 5'-phosphate + H2O2 + NH4(+). It carries out the reaction pyridoxine 5'-phosphate + O2 = pyridoxal 5'-phosphate + H2O2. The enzyme catalyses (6R)-NADHX = (6S)-NADHX. The catalysed reaction is (6R)-NADPHX = (6S)-NADPHX. It functions in the pathway cofactor metabolism; pyridoxal 5'-phosphate salvage; pyridoxal 5'-phosphate from pyridoxamine 5'-phosphate: step 1/1. Its pathway is cofactor metabolism; pyridoxal 5'-phosphate salvage; pyridoxal 5'-phosphate from pyridoxine 5'-phosphate: step 1/1. In terms of biological role, catalyzes the oxidation of either pyridoxine 5'-phosphate (PNP) or pyridoxamine 5'-phosphate (PMP) into pyridoxal 5'-phosphate (PLP). Involved in the PLP salvage pathway. Has a higher preference for PNP over PMP. May also catalyze the epimerization of the S- and R-forms of NAD(P)HX, a damaged form of NAD(P)H that is a result of enzymatic or heat-dependent hydration. This is a prerequisite for the S-specific NAD(P)H-hydrate dehydratase to allow the repair of both epimers of NAD(P)HX. In Arabidopsis thaliana (Mouse-ear cress), this protein is Pyridoxine/pyridoxamine 5'-phosphate oxidase 1, chloroplastic (PPOX1).